We begin with the raw amino-acid sequence, 150 residues long: Transthyretin (150 aa).

A signal peptide spans 1-20; it reads MGSSSLLLVCLAGMVYLTEA. Cys-33 is modified (sulfocysteine). Residues Lys-38, Glu-77, and Ser-140 each coordinate L-thyroxine.

The protein belongs to the transthyretin family. In terms of assembly, homotetramer. Dimer of dimers. In the homotetramer, subunits assemble around a central channel that can accommodate two ligand molecules. Interacts with RBP4. Post-translationally, sulfonation of the reactive cysteine Cys-33 enhances the stability of the native conformation of TTR, avoiding misassembly of the protein leading to amyloid formation. Detected in choroid plexus (at protein level). Detected in choroid plexus.

The protein localises to the secreted. Its function is as follows. Thyroid hormone-binding protein. Probably transports thyroxine from the bloodstream to the brain. The polypeptide is Transthyretin (TTR) (Tiliqua rugosa (Shingleback lizard)).